Consider the following 489-residue polypeptide: Long chain base biosynthesis protein 2b (489 aa).

A helical membrane pass occupies residues 2-22; sequence ITIPYLTAVSTYFSYGLLFAF. N6-(pyridoxal phosphate)lysine is present on Lys311.

It belongs to the class-II pyridoxal-phosphate-dependent aminotransferase family. In terms of assembly, heterodimer with LCB1. Component of the serine palmitoyltransferase (SPT) complex, composed of LCB1 and LCB2 (LCB2a or LCB2b). Pyridoxal 5'-phosphate is required as a cofactor. In terms of tissue distribution, ubiquitous with the highest expression in flowers.

It is found in the endoplasmic reticulum membrane. The catalysed reaction is L-serine + hexadecanoyl-CoA + H(+) = 3-oxosphinganine + CO2 + CoA. It functions in the pathway lipid metabolism; sphingolipid metabolism. Its function is as follows. Serine palmitoyltransferase (SPT). The heterodimer formed with LCB1 constitutes the catalytic core. Plays an important role during male gametogenesis and embryogenesis. This Arabidopsis thaliana (Mouse-ear cress) protein is Long chain base biosynthesis protein 2b (LCB2b).